The chain runs to 152 residues: UPF0266 membrane protein plu2700 (152 aa).

3 helical membrane-spanning segments follow: residues 6–26 (IALT…EFVV), 45–65 (IDAL…ITVY), and 67–87 (SRLT…IAYI).

It belongs to the UPF0266 family.

It localises to the cell inner membrane. This chain is UPF0266 membrane protein plu2700, found in Photorhabdus laumondii subsp. laumondii (strain DSM 15139 / CIP 105565 / TT01) (Photorhabdus luminescens subsp. laumondii).